A 236-amino-acid chain; its full sequence is Biosynthetic peptidoglycan transglycosylase (236 aa).

A helical transmembrane segment spans residues 12–31 (ALLWFAASSIVLVLVFRWVP).

This sequence belongs to the glycosyltransferase 51 family.

It is found in the cell inner membrane. The catalysed reaction is [GlcNAc-(1-&gt;4)-Mur2Ac(oyl-L-Ala-gamma-D-Glu-L-Lys-D-Ala-D-Ala)](n)-di-trans,octa-cis-undecaprenyl diphosphate + beta-D-GlcNAc-(1-&gt;4)-Mur2Ac(oyl-L-Ala-gamma-D-Glu-L-Lys-D-Ala-D-Ala)-di-trans,octa-cis-undecaprenyl diphosphate = [GlcNAc-(1-&gt;4)-Mur2Ac(oyl-L-Ala-gamma-D-Glu-L-Lys-D-Ala-D-Ala)](n+1)-di-trans,octa-cis-undecaprenyl diphosphate + di-trans,octa-cis-undecaprenyl diphosphate + H(+). Its pathway is cell wall biogenesis; peptidoglycan biosynthesis. In terms of biological role, peptidoglycan polymerase that catalyzes glycan chain elongation from lipid-linked precursors. The chain is Biosynthetic peptidoglycan transglycosylase from Pseudomonas putida (strain GB-1).